The primary structure comprises 314 residues: Small ribosomal subunit protein uS11m (314 aa).

Residues 1–37 (MNGVSRHLRASSLLSLIRSYGGINSVCRFSSQSDGFS) constitute a mitochondrion transit peptide. The disordered stretch occupies residues 34-138 (DGFSGGRFRE…GSGFSAPSLS (105 aa)). The span at 50 to 63 (ESANNSGLSNTGRI) shows a compositional bias: polar residues. The segment covering 103–114 (SSLRSRLPNSLP) has biased composition (low complexity).

This sequence belongs to the universal ribosomal protein uS11 family. As to quaternary structure, component of the mitochondrial ribosome small subunit (28S) which comprises a 12S rRNA and about 30 distinct proteins.

Its subcellular location is the mitochondrion. In terms of biological role, required for karyogamy during female gametophyte development, when the two polar nuclei fuse to form the diploid central cell nucleus. The protein is Small ribosomal subunit protein uS11m of Arabidopsis thaliana (Mouse-ear cress).